Reading from the N-terminus, the 597-residue chain is Phosphomethylpyrimidine synthase (597 aa).

Substrate is bound by residues Asn-207, Met-236, Tyr-265, His-301, 321-323 (SRG), 362-365 (DGLR), and Glu-401. His-405 is a Zn(2+) binding site. Substrate is bound at residue Tyr-428. Position 469 (His-469) interacts with Zn(2+). Positions 549, 552, and 557 each coordinate [4Fe-4S] cluster.

The protein belongs to the ThiC family. Homodimer. Requires [4Fe-4S] cluster as cofactor.

It carries out the reaction 5-amino-1-(5-phospho-beta-D-ribosyl)imidazole + S-adenosyl-L-methionine = 4-amino-2-methyl-5-(phosphooxymethyl)pyrimidine + CO + 5'-deoxyadenosine + formate + L-methionine + 3 H(+). It functions in the pathway cofactor biosynthesis; thiamine diphosphate biosynthesis. Catalyzes the synthesis of the hydroxymethylpyrimidine phosphate (HMP-P) moiety of thiamine from aminoimidazole ribotide (AIR) in a radical S-adenosyl-L-methionine (SAM)-dependent reaction. The sequence is that of Phosphomethylpyrimidine synthase from Gluconobacter oxydans (strain 621H) (Gluconobacter suboxydans).